The sequence spans 422 residues: Keratin, type I cytoskeletal 23 (422 aa).

Over residues 1–24 (MNSSHSFNQTYSASVHSLGSTRGR) the composition is skewed to polar residues. Residues 1–35 (MNSSHSFNQTYSASVHSLGSTRGRQGSCHRAPSVH) are disordered. Residues 1–71 (MNSSHSFNQT…GRSSPLLGGN (71 aa)) are head. Positions 72-107 (GKATMQNLNDRLATYLEKVRALEEANSKLETRILRW) are coil 1A. The IF rod domain maps to 72–382 (GKATMQNLND…RLLEGDTEGT (311 aa)). The linker 1 stretch occupies residues 108-125 (HQEREPSHRKDYSQYEEN). The coil 1B stretch occupies residues 126 to 217 (ISRLQEQIVD…KRHEQEMEEN (92 aa)). The linker 12 stretch occupies residues 218-240 (HLPSDFKVSVKVDTTPGEDLIKV). Residues 241 to 378 (LEDMRQEYEL…ATYRRLLEGD (138 aa)) are coil 2. A rod-like helical tail region spans residues 379-422 (TEGTMDGSESRLKGSEASTIKAITQESVNGRIVLSQVNEIQKHI).

It belongs to the intermediate filament family. As to quaternary structure, heterotetramer of two type I and two type II keratins.

This chain is Keratin, type I cytoskeletal 23 (Krt23), found in Mus musculus (Mouse).